We begin with the raw amino-acid sequence, 253 residues long: DNA repair protein RecO (253 aa).

Belongs to the RecO family.

In terms of biological role, involved in DNA repair and RecF pathway recombination. This is DNA repair protein RecO from Pediococcus pentosaceus (strain ATCC 25745 / CCUG 21536 / LMG 10740 / 183-1w).